The primary structure comprises 170 residues: Photosystem II extrinsic protein V (170 aa).

Residues 1 to 33 (MVSVFSSLRQSFKGLLVLVPVLIGLAFISPAEA) form the signal peptide. Positions 70, 73, 74, and 137 each coordinate heme c.

It belongs to the cytochrome c family. PsbV subfamily. As to quaternary structure, PSII is composed of 1 copy each of membrane proteins PsbA, PsbB, PsbC, PsbD, PsbE, PsbF, PsbH, PsbI, PsbJ, PsbK, PsbL, PsbM, PsbT, PsbX, PsbY, PsbZ, Psb30/Ycf12, peripheral proteins PsbO, CyanoQ (PsbQ), PsbU, PsbV and a large number of cofactors. It forms dimeric complexes. Heme c is required as a cofactor.

It localises to the cellular thylakoid membrane. One of the extrinsic, lumenal subunits of photosystem II (PSII). PSII is a light-driven water plastoquinone oxidoreductase, using light energy to abstract electrons from H(2)O, generating a proton gradient subsequently used for ATP formation. The extrinsic proteins stabilize the structure of photosystem II oxygen-evolving complex (OEC), the ion environment of oxygen evolution and protect the OEC against heat-induced inactivation. Low-potential cytochrome c that plays a role in the OEC of PSII. The sequence is that of Photosystem II extrinsic protein V from Synechococcus sp. (strain CC9902).